The chain runs to 283 residues: Glutamate racemase (283 aa).

Substrate is bound by residues 7 to 8 (DS) and 39 to 40 (YG). Catalysis depends on C70, which acts as the Proton donor/acceptor. A substrate-binding site is contributed by 71–72 (NT). The active-site Proton donor/acceptor is the C206. 207–208 (TH) is a substrate binding site.

Belongs to the aspartate/glutamate racemases family.

The enzyme catalyses L-glutamate = D-glutamate. It participates in cell wall biogenesis; peptidoglycan biosynthesis. Provides the (R)-glutamate required for cell wall biosynthesis. In Phenylobacterium zucineum (strain HLK1), this protein is Glutamate racemase.